We begin with the raw amino-acid sequence, 129 residues long: Biogenesis of lysosome-related organelles complex 1 subunit CNL1 (129 aa).

Belongs to the BLOC1S4 family. In terms of assembly, component of the biogenesis of lysosome-related organelles complex-1 (BLOC-1).

The protein localises to the cytoplasm. In terms of biological role, component of the biogenesis of lysosome-related organelles complex-1 (BLOC-1), a complex that is involved in endosomal cargo sorting. In Eremothecium gossypii (strain ATCC 10895 / CBS 109.51 / FGSC 9923 / NRRL Y-1056) (Yeast), this protein is Biogenesis of lysosome-related organelles complex 1 subunit CNL1 (CLN1).